Consider the following 209-residue polypeptide: Glutathione S-transferase 1, isoform C (209 aa).

Residues 1 to 80 enclose the GST N-terminal domain; that stretch reads MDFYYLPGSA…YLAEKYGKDD (80 aa). Residues Ser-9, 50 to 52, and 64 to 66 each bind glutathione; these read HCI and ESR. A GST C-terminal domain is found at 86 to 207; sequence DPQKRAVVNQ…AGIEEFKKYF (122 aa).

It belongs to the GST superfamily. Theta family. As to quaternary structure, homodimer.

It catalyses the reaction RX + glutathione = an S-substituted glutathione + a halide anion + H(+). It carries out the reaction 1,1,1-trichloro-2,2-bis(4-chlorophenyl)ethane = 1,1-dichloro-2,2-bis(4-chlorophenyl)ethylene + chloride + H(+). Conjugation of reduced glutathione to a wide number of exogenous and endogenous hydrophobic electrophiles. Has DDT dehydrochlorinase activity. This Anopheles gambiae (African malaria mosquito) protein is Glutathione S-transferase 1, isoform C (GstD1).